The sequence spans 67 residues: Protein AaeX (67 aa).

A run of 2 helical transmembrane segments spans residues 3 to 23 (LLPVMVIFGLSFPPIFLELLI) and 39 to 59 (GIYEFVWHPALFNTALYCCLF).

This sequence belongs to the AaeX family.

It localises to the cell membrane. In Yersinia pseudotuberculosis serotype O:1b (strain IP 31758), this protein is Protein AaeX.